A 211-amino-acid polypeptide reads, in one-letter code: Claudin-7 (211 aa).

The Cytoplasmic portion of the chain corresponds to 1–7 (MANSGLQ). A helical transmembrane segment spans residues 8–28 (LLGFSMAMLGWVGLIASTAIP). Residues 29-81 (QWQMSSYAGDNIITAQAMYKGLWMECVTQSTGMMSCKMYDSVLALPGALQATR) lie on the Extracellular side of the membrane. A helical membrane pass occupies residues 82 to 102 (ALMVVSLVLGFLAMFVATMGM). The Cytoplasmic segment spans residues 103–119 (KCTRCGGDDKAKKARIA). Residues 120 to 140 (MTGGIVFIVAGLAALVACSWI) form a helical membrane-spanning segment. Over 141–160 (GHQIVTDFYNPLTPMNVKYE) the chain is Extracellular. A helical membrane pass occupies residues 161–181 (FGPAIFIGWAGSALVLLGGAL). Over 182 to 211 (LSCSCPGSESKAAYRAPRSYPKSNSSKEYV) the chain is Cytoplasmic. Residues 210–211 (YV) form an interactions with TJP1, TJP2 and TJP3 region.

Belongs to the claudin family. As to quaternary structure, directly interacts with TJP1/ZO-1, TJP2/ZO-2 and TJP3/ZO-3. The phosphorylated form interacts with EPCAM. Phosphorylated. As to expression, expressed predominantly in lung and kidney.

Its subcellular location is the cell membrane. The protein localises to the basolateral cell membrane. It is found in the cell junction. It localises to the tight junction. Plays a major role in tight junction-specific obliteration of the intercellular space, through calcium-independent cell-adhesion activity. The sequence is that of Claudin-7 (Cldn7) from Mus musculus (Mouse).